A 300-amino-acid polypeptide reads, in one-letter code: GTPase Era (300 aa).

In terms of domain architecture, Era-type G spans Arg-8–Glu-176. The G1 stretch occupies residues Gly-16–Ser-23. Position 16–23 (Gly-16–Ser-23) interacts with GTP. A G2 region spans residues Gln-42–His-46. The segment at Asp-63–Gly-66 is G3. GTP contacts are provided by residues Asp-63–Met-67 and Asn-125–Asp-128. Residues Asn-125–Asp-128 are G4. The tract at residues Ile-155–Ala-157 is G5. A KH type-2 domain is found at Val-199–Gly-283.

Belongs to the TRAFAC class TrmE-Era-EngA-EngB-Septin-like GTPase superfamily. Era GTPase family. Monomer.

It is found in the cytoplasm. Its subcellular location is the cell inner membrane. In terms of biological role, an essential GTPase that binds both GDP and GTP, with rapid nucleotide exchange. Plays a role in 16S rRNA processing and 30S ribosomal subunit biogenesis and possibly also in cell cycle regulation and energy metabolism. This Pseudomonas putida (strain ATCC 700007 / DSM 6899 / JCM 31910 / BCRC 17059 / LMG 24140 / F1) protein is GTPase Era.